The primary structure comprises 467 residues: Probable tryptophanase (467 aa).

The residue at position 263 (Lys-263) is an N6-(pyridoxal phosphate)lysine.

Belongs to the beta-eliminating lyase family. Pyridoxal 5'-phosphate is required as a cofactor.

The catalysed reaction is L-tryptophan + H2O = indole + pyruvate + NH4(+). It participates in amino-acid degradation; L-tryptophan degradation via pyruvate pathway; indole and pyruvate from L-tryptophan: step 1/1. The protein is Probable tryptophanase (tnaA) of Aeropyrum pernix (strain ATCC 700893 / DSM 11879 / JCM 9820 / NBRC 100138 / K1).